The chain runs to 403 residues: Presqualene diphosphate synthase (403 aa).

D84, E87, and D88 together coordinate Mg(2+).

Belongs to the phytoene/squalene synthase family. The cofactor is Mg(2+).

The enzyme catalyses 2 (2E,6E)-farnesyl diphosphate = presqualene diphosphate + diphosphate. Its function is as follows. Catalyzes the biosynthesis of presqualene diphosphate (PSPP). Works in combination with SSL-2 or SSL-3 to produce respectively squalene or botryococcene. In most other species, farnesyl diphosphate (FPP) is converted into squalene in a two-step reaction by a single enzyme. The polypeptide is Presqualene diphosphate synthase (SSL-1) (Botryococcus braunii (Green alga)).